We begin with the raw amino-acid sequence, 174 residues long: MNQILFIVGARGAGKTTVGKLLANELSYTFIDTDHHIQQTSNMTIADIVNQQGWQQFRQLESQALQQVTQINRVISTGGGIILSAENRQYMRQNGTVIYLQASASILAERLMQQPESTQRPSLTGKSIVEEMEEVLAARENLYCECANHIINAHLSPEKITTYVKEIMFSGIVS.

12-17 (GAGKTT) lines the ATP pocket. Mg(2+) is bound by residues T16 and D32. Substrate-binding residues include D34, R58, and G79. Residues 112–126 (MQQPESTQRPSLTGK) form an LID domain region. Position 120 (R120) interacts with ATP. R139 contacts substrate.

Belongs to the shikimate kinase family. AroL subfamily. Monomer. It depends on Mg(2+) as a cofactor.

The protein resides in the cytoplasm. It catalyses the reaction shikimate + ATP = 3-phosphoshikimate + ADP + H(+). It functions in the pathway metabolic intermediate biosynthesis; chorismate biosynthesis; chorismate from D-erythrose 4-phosphate and phosphoenolpyruvate: step 5/7. Its function is as follows. Catalyzes the specific phosphorylation of the 3-hydroxyl group of shikimic acid using ATP as a cosubstrate. The sequence is that of Shikimate kinase 2 from Photorhabdus laumondii subsp. laumondii (strain DSM 15139 / CIP 105565 / TT01) (Photorhabdus luminescens subsp. laumondii).